The chain runs to 447 residues: MSEYYDFNKMEYIGNQKGLKAGDGFHYYNPDELIQGKKMSEWLKFSVAYWHTMDQRLVDPFGDGTAQRPWDKFEDPMEQALAKVDYMFEFLDKMNVEYFAFHDRDLAPEGNTLRETNANLDKVVDKIVEKMQETGKKVLWNTSSLFTNPRFVAGGATAPFADIVAYSAAQIKHSLEIAKRVNSMNYVFWGGREGYESLLNTDMKLEQEHIAKFFHMAKDYANEIGYTGQFLLEPKPKEPTSHQYDTDAATTIAFLKTYGLEKDFKLNLEGNHAYLAGHTYEHEVRVARDAGLLGSLDANMGDKLIGWDIDEFPNDIYEATLVMYEMLKNGGLATGGLNFDAKPRRQSFTMEDLFLAHTAGMDTYAAGLRVAAKLLEDRVFDSVIEDRYSSFKSGIGADFENDKVTFKELEDYVIDKPQSELIAATKSGHLEQLKSTLNNYIFTVLGK.

Residues His-102 and Asp-105 contribute to the active site. Mg(2+) is bound by residues Glu-233, Glu-269, His-272, Asp-297, Asp-308, Asp-310, and Asp-340.

Belongs to the xylose isomerase family. As to quaternary structure, homotetramer. Mg(2+) serves as cofactor.

Its subcellular location is the cytoplasm. It catalyses the reaction alpha-D-xylose = alpha-D-xylulofuranose. In Pediococcus pentosaceus (strain ATCC 25745 / CCUG 21536 / LMG 10740 / 183-1w), this protein is Xylose isomerase.